Reading from the N-terminus, the 122-residue chain is Large ribosomal subunit protein uL18 (122 aa).

It belongs to the universal ribosomal protein uL18 family. In terms of assembly, part of the 50S ribosomal subunit; part of the 5S rRNA/L5/L18/L25 subcomplex. Contacts the 5S and 23S rRNAs.

Its function is as follows. This is one of the proteins that bind and probably mediate the attachment of the 5S RNA into the large ribosomal subunit, where it forms part of the central protuberance. The polypeptide is Large ribosomal subunit protein uL18 (Desulfitobacterium hafniense (strain DSM 10664 / DCB-2)).